Consider the following 155-residue polypeptide: SsrA-binding protein (155 aa).

Belongs to the SmpB family.

Its subcellular location is the cytoplasm. In terms of biological role, required for rescue of stalled ribosomes mediated by trans-translation. Binds to transfer-messenger RNA (tmRNA), required for stable association of tmRNA with ribosomes. tmRNA and SmpB together mimic tRNA shape, replacing the anticodon stem-loop with SmpB. tmRNA is encoded by the ssrA gene; the 2 termini fold to resemble tRNA(Ala) and it encodes a 'tag peptide', a short internal open reading frame. During trans-translation Ala-aminoacylated tmRNA acts like a tRNA, entering the A-site of stalled ribosomes, displacing the stalled mRNA. The ribosome then switches to translate the ORF on the tmRNA; the nascent peptide is terminated with the 'tag peptide' encoded by the tmRNA and targeted for degradation. The ribosome is freed to recommence translation, which seems to be the essential function of trans-translation. In Streptococcus equi subsp. zooepidemicus (strain MGCS10565), this protein is SsrA-binding protein.